A 303-amino-acid chain; its full sequence is tRNA dimethylallyltransferase (303 aa).

9-16 (GPTASGKS) provides a ligand contact to ATP. 11 to 16 (TASGKS) lines the substrate pocket. The segment at 34-37 (DSKQ) is interaction with substrate tRNA.

It belongs to the IPP transferase family. As to quaternary structure, monomer. Mg(2+) serves as cofactor.

The enzyme catalyses adenosine(37) in tRNA + dimethylallyl diphosphate = N(6)-dimethylallyladenosine(37) in tRNA + diphosphate. Its function is as follows. Catalyzes the transfer of a dimethylallyl group onto the adenine at position 37 in tRNAs that read codons beginning with uridine, leading to the formation of N6-(dimethylallyl)adenosine (i(6)A). This chain is tRNA dimethylallyltransferase, found in Ehrlichia chaffeensis (strain ATCC CRL-10679 / Arkansas).